A 393-amino-acid polypeptide reads, in one-letter code: NAD(P)H-quinone oxidoreductase subunit H, chloroplastic (393 aa).

It belongs to the complex I 49 kDa subunit family. In terms of assembly, NDH is composed of at least 16 different subunits, 5 of which are encoded in the nucleus.

It is found in the plastid. It localises to the chloroplast thylakoid membrane. The enzyme catalyses a plastoquinone + NADH + (n+1) H(+)(in) = a plastoquinol + NAD(+) + n H(+)(out). It carries out the reaction a plastoquinone + NADPH + (n+1) H(+)(in) = a plastoquinol + NADP(+) + n H(+)(out). In terms of biological role, NDH shuttles electrons from NAD(P)H:plastoquinone, via FMN and iron-sulfur (Fe-S) centers, to quinones in the photosynthetic chain and possibly in a chloroplast respiratory chain. The immediate electron acceptor for the enzyme in this species is believed to be plastoquinone. Couples the redox reaction to proton translocation, and thus conserves the redox energy in a proton gradient. The sequence is that of NAD(P)H-quinone oxidoreductase subunit H, chloroplastic from Carica papaya (Papaya).